A 270-amino-acid chain; its full sequence is Proteasome inhibitor PI31 subunit (270 aa).

An N-acetylalanine modification is found at Ala2. Residues 2-150 form an important for homodimerization and interaction with FBXO7 region; it reads AGLEVLFASA…PIHEQWEKAN (149 aa). A Phosphoserine modification is found at Ser152. At Arg204 the chain carries Omega-N-methylarginine. Arg218 carries the asymmetric dimethylarginine modification. The interval 220-270 is disordered; the sequence is LIDPSSGLPNRLPPGAVPPGARFDPFGPIGTSPSGPNPDHLPPPGYDDMYL. An Omega-N-methylarginine modification is found at Arg230. Ser251 is subject to Phosphoserine. Residues 254 to 264 show a composition bias toward pro residues; that stretch reads GPNPDHLPPPG.

The protein belongs to the proteasome inhibitor PI31 family. Monomer and homodimer. Interacts with FBXO7.

It localises to the cytoplasm. The protein localises to the endoplasmic reticulum. Plays an important role in control of proteasome function. Inhibits the hydrolysis of protein and peptide substrates by the 20S proteasome. Also inhibits the activation of the proteasome by the proteasome regulatory proteins PA700 and PA28. This chain is Proteasome inhibitor PI31 subunit (PSMF1), found in Bos taurus (Bovine).